A 525-amino-acid polypeptide reads, in one-letter code: GMP synthase [glutamine-hydrolyzing] (525 aa).

The region spanning 12-203 (TVLVVDFGAQ…LYRGAGLTPS (192 aa)) is the Glutamine amidotransferase type-1 domain. The active-site Nucleophile is the cysteine 89. Residues histidine 177 and glutamate 179 contribute to the active site. The 196-residue stretch at 204–399 (WTTGNVIDEQ…LGLPDEIVQR (196 aa)) folds into the GMPS ATP-PPase domain. 231–237 (SGGVDSA) provides a ligand contact to ATP.

As to quaternary structure, homodimer.

The enzyme catalyses XMP + L-glutamine + ATP + H2O = GMP + L-glutamate + AMP + diphosphate + 2 H(+). It functions in the pathway purine metabolism; GMP biosynthesis; GMP from XMP (L-Gln route): step 1/1. Catalyzes the synthesis of GMP from XMP. This Streptomyces avermitilis (strain ATCC 31267 / DSM 46492 / JCM 5070 / NBRC 14893 / NCIMB 12804 / NRRL 8165 / MA-4680) protein is GMP synthase [glutamine-hydrolyzing].